Here is a 394-residue protein sequence, read N- to C-terminus: Elongation factor Tu (394 aa).

Residues lysine 10–glutamate 204 form the tr-type G domain. The tract at residues glycine 19 to threonine 26 is G1. A GTP-binding site is contributed by glycine 19–threonine 26. Threonine 26 contributes to the Mg(2+) binding site. The segment at glycine 60 to asparagine 64 is G2. Residues aspartate 81–glycine 84 form a G3 region. GTP-binding positions include aspartate 81–histidine 85 and asparagine 136–aspartate 139. The segment at asparagine 136–aspartate 139 is G4. The tract at residues serine 174–leucine 176 is G5.

This sequence belongs to the TRAFAC class translation factor GTPase superfamily. Classic translation factor GTPase family. EF-Tu/EF-1A subfamily. As to quaternary structure, monomer.

Its subcellular location is the cytoplasm. It carries out the reaction GTP + H2O = GDP + phosphate + H(+). GTP hydrolase that promotes the GTP-dependent binding of aminoacyl-tRNA to the A-site of ribosomes during protein biosynthesis. In Histophilus somni (strain 129Pt) (Haemophilus somnus), this protein is Elongation factor Tu.